A 197-amino-acid chain; its full sequence is Segregation and condensation protein B (197 aa).

This sequence belongs to the ScpB family. In terms of assembly, homodimer. Homodimerization may be required to stabilize the binding of ScpA to the Smc head domains. Component of a cohesin-like complex composed of ScpA, ScpB and the Smc homodimer, in which ScpA and ScpB bind to the head domain of Smc. The presence of the three proteins is required for the association of the complex with DNA.

It is found in the cytoplasm. Its function is as follows. Participates in chromosomal partition during cell division. May act via the formation of a condensin-like complex containing Smc and ScpA that pull DNA away from mid-cell into both cell halves. In Malacoplasma penetrans (strain HF-2) (Mycoplasma penetrans), this protein is Segregation and condensation protein B.